Reading from the N-terminus, the 151-residue chain is Large ribosomal subunit protein bL9 (151 aa).

This sequence belongs to the bacterial ribosomal protein bL9 family.

Its function is as follows. Binds to the 23S rRNA. In Pseudothermotoga lettingae (strain ATCC BAA-301 / DSM 14385 / NBRC 107922 / TMO) (Thermotoga lettingae), this protein is Large ribosomal subunit protein bL9.